Here is a 258-residue protein sequence, read N- to C-terminus: Venom plasminogen activator (258 aa).

Residues 1-18 (MVLIRVLANLLILQLSYA) form the signal peptide. Positions 19-24 (QKSSEL) are excised as a propeptide. Residues 25–249 (VVGGDECNIN…YTDWIQSIIS (225 aa)) form the Peptidase S1 domain. Disulfide bonds link cysteine 31/cysteine 163, cysteine 50/cysteine 66, cysteine 98/cysteine 256, cysteine 142/cysteine 210, cysteine 174/cysteine 189, and cysteine 200/cysteine 225. Asparagine 44 carries an N-linked (GlcNAc...) asparagine glycan. Residues histidine 65 and aspartate 110 each act as charge relay system in the active site. Serine 204 serves as the catalytic Charge relay system.

This sequence belongs to the peptidase S1 family. Snake venom subfamily. As to quaternary structure, monomer. As to expression, expressed by the venom gland.

Its subcellular location is the secreted. In terms of biological role, snake venom serine protease that activates plasminogen. Shows a preferential cleavage at Arg-|-Xaa instead of Lys-|-Xaa bonds. This Agkistrodon piscivorus leucostoma (Western cottonmouth) protein is Venom plasminogen activator.